A 46-amino-acid polypeptide reads, in one-letter code: Viscotoxin-A2 (46 aa).

3 disulfide bridges follow: Cys-3/Cys-40, Cys-4/Cys-32, and Cys-16/Cys-26.

Belongs to the plant thionin (TC 1.C.44) family.

The protein localises to the secreted. In terms of biological role, thionins are small plant proteins which are toxic to animal cells. They seem to exert their toxic effect at the level of the cell membrane. Their precise function is not known. The polypeptide is Viscotoxin-A2 (THI2.3) (Viscum album (European mistletoe)).